Reading from the N-terminus, the 473-residue chain is MKTLYSLRRFYHVETLFNGTLALAGRDQETTGFAWWAGNARLINLSGKLLGAHVAHAGLIVFWAGAMNLFEVAHFVPEKPMYEQGLILLPHLATLGWGVGPGGEVIDTFPYFVSGVLHLISSAVLGFGGIYHALLGPETLEESFPFFGYVWKDRNKMTTILGIHLILLGIGAFLLVLKALYFGGVYDTWAPGGGDVRKITNLTLSPSVIFGYSLKSPFGGEGWIVSVDDLEDIIGGHVWLGSICILGGIWHILTKPFAWARRAFVWSGEAYLSYSLGALSVFGFIACCFVWFNNTAYPSEFYGPTGPEASQAQAFTFLVRDQRLGANVGSAQGPTGLGKYLMRSPTGEVIFGGETMRFWDLRAPWLEPLRGPNGLDLSRLKKDIQPWQERRSAEYMTHAPLGSLNSVGGVATEINAVNYVSPRSWLATSHFVLGFFLFVGHLWHAGRARAAAAGFEKGIDRDFEPVLSMTPLN.

The propeptide occupies 1-14; sequence MKTLYSLRRFYHVE. T15 carries the N-acetylthreonine modification. Position 15 is a phosphothreonine (T15). 5 helical membrane passes run 69–93, 134–155, 178–200, 255–275, and 291–312; these read LFEV…PHLA, LLGP…KDRN, KALY…RKIT, KPFA…LSYS, and WFNN…ASQA. [CaMn4O5] cluster is bound at residue E367. The helical transmembrane segment at 447 to 471 threads the bilayer; the sequence is RARAAAAGFEKGIDRDFEPVLSMTP.

Belongs to the PsbB/PsbC family. PsbC subfamily. As to quaternary structure, PSII is composed of 1 copy each of membrane proteins PsbA, PsbB, PsbC, PsbD, PsbE, PsbF, PsbH, PsbI, PsbJ, PsbK, PsbL, PsbM, PsbT, PsbX, PsbY, PsbZ, Psb30/Ycf12, at least 3 peripheral proteins of the oxygen-evolving complex and a large number of cofactors. It forms dimeric complexes. Binds multiple chlorophylls and provides some of the ligands for the Ca-4Mn-5O cluster of the oxygen-evolving complex. It may also provide a ligand for a Cl- that is required for oxygen evolution. PSII binds additional chlorophylls, carotenoids and specific lipids. is required as a cofactor.

Its subcellular location is the plastid. It localises to the chloroplast thylakoid membrane. One of the components of the core complex of photosystem II (PSII). It binds chlorophyll and helps catalyze the primary light-induced photochemical processes of PSII. PSII is a light-driven water:plastoquinone oxidoreductase, using light energy to abstract electrons from H(2)O, generating O(2) and a proton gradient subsequently used for ATP formation. The sequence is that of Photosystem II CP43 reaction center protein from Chloranthus spicatus (Chulantree).